A 113-amino-acid chain; its full sequence is PTS system fructose-like EIIB component 3 (113 aa).

A PTS EIIB type-2 domain is found at 1–100; the sequence is MAYLVAVTAC…PQRVMSAVRK (100 aa). Cys10 serves as the catalytic Phosphocysteine intermediate. Phosphocysteine; by EIIA is present on Cys10.

The protein localises to the cytoplasm. It catalyses the reaction D-fructose(out) + N(pros)-phospho-L-histidyl-[protein] = D-fructose 1-phosphate(in) + L-histidyl-[protein]. Its function is as follows. The phosphoenolpyruvate-dependent sugar phosphotransferase system (sugar PTS), a major carbohydrate active transport system, catalyzes the phosphorylation of incoming sugar substrates concomitantly with their translocation across the cell membrane. This Escherichia coli (strain K12) protein is PTS system fructose-like EIIB component 3 (frwD).